The sequence spans 539 residues: Neutral amino acid transporter B(0) (539 aa).

The residue at position 1 (Met1) is an N-acetylmethionine. At 1-52 the chain is on the cytoplasmic side; that stretch reads MVADPPKGDPKGYAAAEPTANGVSMLVPIEDVGSLKGGRCGSGDQVRRCLRA. A helical membrane pass occupies residues 53-82; the sequence is NLLVLLTVVAVVAGVALGLGVSGAGGAFAL. Residues 83 to 95 are Extracellular-facing; it reads GPARLEAFSFPGE. The helical transmembrane segment at 96-117 threads the bilayer; the sequence is LLLRLLKMIILPLVVCSLIGGA. Topologically, residues 118–131 are cytoplasmic; the sequence is ASLDPSALGRLGAW. A helical transmembrane segment spans residues 132 to 154; it reads ALLFFLVTTLLASALGVGLALAL. Topologically, residues 155–223 are extracellular; sequence QPGAAFAAIN…GTLVKVPTGG (69 aa). N-linked (GlcNAc...) asparagine glycans are attached at residues Asn164 and Asn213. The chain crosses the membrane as a helical span at residues 224–247; the sequence is EVEGMNILGLVVFAIIFGVALRKL. Topologically, residues 248–256 are cytoplasmic; it reads GPEGELLIR. The chain crosses the membrane as a helical span at residues 257 to 284; that stretch reads FFNSFNDATMVLVSWIMWYAPVGILFLV. Over 285–305 the chain is Extracellular; that stretch reads AGKIVEMENVGLLFASLGKYI. Residues 306–327 traverse the membrane as a helical segment; the sequence is LCCLLGHAIHGLLTLPLIYFLF. The Cytoplasmic segment spans residues 328-332; sequence ARKNP. An intramembrane region (discontinuously helical) is located at residues 333–363; it reads YRFLWGIMTPLATAFGTSSSSATLPLMMKCV. The Cytoplasmic portion of the chain corresponds to 364–372; sequence EEKNGVARH. Residues 373–399 form a helical membrane-spanning segment; sequence ISRFILPIGATVNMDGAALFQCVAAVF. Residues Gly381, Thr383, and Asn385 each contribute to the Na(+) site. The Extracellular portion of the chain corresponds to 400–412; that stretch reads IAQLNHRSLDFVK. The discontinuously helical intramembrane region spans 413–446; it reads IITILVTATASSVGAAGIPSGGVLTLAIILEAVN. Residues 447–459 lie on the Extracellular side of the membrane; sequence LPVHDISLILAVD. Residues 460–481 traverse the membrane as a helical segment; the sequence is WLVDRSCTVLNVEGDAFGAGLL. Asn470 and Asp474 together coordinate Na(+). Residues 482–539 are Cytoplasmic-facing; the sequence is QSYLDRTENCNSVPELIQVKSEMPLAALPVPGEEGNPLLKGCPGPAGDADTCEKESVM. Phosphoserine occurs at positions 493, 502, and 537. The disordered stretch occupies residues 518–539; that stretch reads PLLKGCPGPAGDADTCEKESVM.

Belongs to the dicarboxylate/amino acid:cation symporter (DAACS) (TC 2.A.23) family. SLC1A5 subfamily. In terms of assembly, homotrimer.

Its subcellular location is the cell membrane. The protein resides in the melanosome. It carries out the reaction L-glutamine(out) + L-serine(in) + Na(+)(out) = L-glutamine(in) + L-serine(out) + Na(+)(in). It catalyses the reaction L-glutamine(in) + L-serine(out) + Na(+)(out) = L-glutamine(out) + L-serine(in) + Na(+)(in). The catalysed reaction is L-threonine(in) + L-glutamine(out) + Na(+)(out) = L-threonine(out) + L-glutamine(in) + Na(+)(in). The enzyme catalyses L-threonine(out) + L-glutamine(in) + Na(+)(out) = L-threonine(in) + L-glutamine(out) + Na(+)(in). It carries out the reaction L-asparagine(in) + L-glutamine(out) + Na(+)(out) = L-asparagine(out) + L-glutamine(in) + Na(+)(in). It catalyses the reaction L-asparagine(out) + L-glutamine(in) + Na(+)(out) = L-asparagine(in) + L-glutamine(out) + Na(+)(in). The catalysed reaction is L-glutamine(in) + L-alanine(out) + Na(+)(out) = L-glutamine(out) + L-alanine(in) + Na(+)(in). The enzyme catalyses L-valine(out) + L-glutamine(in) + Na(+)(out) = L-valine(in) + L-glutamine(out) + Na(+)(in). It carries out the reaction L-glutamine(in) + L-methionine(out) + Na(+)(out) = L-glutamine(out) + L-methionine(in) + Na(+)(in). It catalyses the reaction L-glutamine(in) + L-glutamate(out) + Na(+)(out) + H(+)(out) = L-glutamine(out) + L-glutamate(in) + Na(+)(in) + H(+)(in). The catalysed reaction is D-serine(in) + L-glutamine(out) + Na(+)(out) = D-serine(out) + L-glutamine(in) + Na(+)(in). The enzyme catalyses D-serine(in) + L-alanine(out) + Na(+)(out) = D-serine(out) + L-alanine(in) + Na(+)(in). It carries out the reaction nitrate(in) = nitrate(out). It catalyses the reaction iodide(out) = iodide(in). The catalysed reaction is thiocyanate(in) = thiocyanate(out). Its function is as follows. Sodium-coupled antiporter of neutral amino acids. In a tri-substrate transport cycle, exchanges neutral amino acids between the extracellular and intracellular compartments, coupled to the inward cotransport of at least one sodium ion. The preferred substrate is the essential amino acid L-glutamine, a precursor for biosynthesis of proteins, nucleotides and amine sugars as well as an alternative fuel for mitochondrial oxidative phosphorylation. Exchanges L-glutamine with other neutral amino acids such as L-serine, L-threonine and L-asparagine in a bidirectional way. Provides L-glutamine to proliferating stem and activated cells driving the metabolic switch toward cell differentiation. The transport cycle is usually pH-independent, with the exception of L-glutamate. Transports extracellular L-glutamate coupled to the cotransport of one proton and one sodium ion in exchange for intracellular L-glutamine counter-ion. May provide for L-glutamate uptake in glial cells regulating glutamine/glutamate cycle in the nervous system. Can transport D-amino acids. Mediates D-serine release from the retinal glia potentially affecting NMDA receptor function in retinal neurons. Displays sodium- and amino acid-dependent but uncoupled channel-like anion conductance with a preference SCN(-) &gt;&gt; NO3(-) &gt; I(-) &gt; Cl(-). Through binding of the fusogenic protein syncytin-1/ERVW-1 may mediate trophoblasts syncytialization, the spontaneous fusion of their plasma membranes, an essential process in placental development. This is Neutral amino acid transporter B(0) (SLC1A5) from Bos taurus (Bovine).